Here is a 248-residue protein sequence, read N- to C-terminus: Biosynthetic peptidoglycan transglycosylase (248 aa).

A helical transmembrane segment spans residues W20–L42.

The protein belongs to the glycosyltransferase 51 family.

The protein localises to the cell inner membrane. It carries out the reaction [GlcNAc-(1-&gt;4)-Mur2Ac(oyl-L-Ala-gamma-D-Glu-L-Lys-D-Ala-D-Ala)](n)-di-trans,octa-cis-undecaprenyl diphosphate + beta-D-GlcNAc-(1-&gt;4)-Mur2Ac(oyl-L-Ala-gamma-D-Glu-L-Lys-D-Ala-D-Ala)-di-trans,octa-cis-undecaprenyl diphosphate = [GlcNAc-(1-&gt;4)-Mur2Ac(oyl-L-Ala-gamma-D-Glu-L-Lys-D-Ala-D-Ala)](n+1)-di-trans,octa-cis-undecaprenyl diphosphate + di-trans,octa-cis-undecaprenyl diphosphate + H(+). It participates in cell wall biogenesis; peptidoglycan biosynthesis. Functionally, peptidoglycan polymerase that catalyzes glycan chain elongation from lipid-linked precursors. The chain is Biosynthetic peptidoglycan transglycosylase from Xanthomonas euvesicatoria pv. vesicatoria (strain 85-10) (Xanthomonas campestris pv. vesicatoria).